Consider the following 116-residue polypeptide: T cell receptor alpha variable 19 (116 aa).

An N-terminal signal peptide occupies residues 1-21 (MLTASLLRAVIASICVVSSMA). The Ig-like domain occupies 22-116 (QKVTQAQTEI…SAVYFCALSE (95 aa)). Residues C43 and C112 are joined by a disulfide bond. Residue N96 is glycosylated (N-linked (GlcNAc...) asparagine).

In terms of assembly, alpha-beta TR is a heterodimer composed of an alpha and beta chain; disulfide-linked. The alpha-beta TR is associated with the transmembrane signaling CD3 coreceptor proteins to form the TR-CD3 (TcR or TCR). The assembly of alpha-beta TR heterodimers with CD3 occurs in the endoplasmic reticulum where a single alpha-beta TR heterodimer associates with one CD3D-CD3E heterodimer, one CD3G-CD3E heterodimer and one CD247 homodimer forming a stable octameric structure. CD3D-CD3E and CD3G-CD3E heterodimers preferentially associate with TR alpha and TR beta chains, respectively. The association of the CD247 homodimer is the last step of TcR assembly in the endoplasmic reticulum and is required for transport to the cell surface.

The protein localises to the cell membrane. V region of the variable domain of T cell receptor (TR) alpha chain that participates in the antigen recognition. Alpha-beta T cell receptors are antigen specific receptors which are essential to the immune response and are present on the cell surface of T lymphocytes. Recognize peptide-major histocompatibility (MH) (pMH) complexes that are displayed by antigen presenting cells (APC), a prerequisite for efficient T cell adaptive immunity against pathogens. Binding of alpha-beta TR to pMH complex initiates TR-CD3 clustering on the cell surface and intracellular activation of LCK that phosphorylates the ITAM motifs of CD3G, CD3D, CD3E and CD247 enabling the recruitment of ZAP70. In turn ZAP70 phosphorylates LAT, which recruits numerous signaling molecules to form the LAT signalosome. The LAT signalosome propagates signal branching to three major signaling pathways, the calcium, the mitogen-activated protein kinase (MAPK) kinase and the nuclear factor NF-kappa-B (NF-kB) pathways, leading to the mobilization of transcription factors that are critical for gene expression and essential for T cell growth and differentiation. The T cell repertoire is generated in the thymus, by V-(D)-J rearrangement. This repertoire is then shaped by intrathymic selection events to generate a peripheral T cell pool of self-MH restricted, non-autoaggressive T cells. Post-thymic interaction of alpha-beta TR with the pMH complexes shapes TR structural and functional avidity. The chain is T cell receptor alpha variable 19 from Homo sapiens (Human).